Reading from the N-terminus, the 440-residue chain is Protein disulfide-isomerase A6 (440 aa).

The N-terminal stretch at 1 to 19 is a signal peptide; sequence MALLVLGLVSCTFFLAVNG. 2 consecutive Thioredoxin domains span residues 20–133 and 154–287; these read LYSS…ALRQ and SDSS…EDIA. Catalysis depends on nucleophile residues C55 and C58. The cysteines at positions 55 and 58 are disulfide-linked. A Phosphoserine modification is found at S129. A disordered region spans residues 141–161; that stretch reads GRSGGYSSGKQGRSDSSSKKD. The span at 152–161 shows a compositional bias: basic and acidic residues; sequence GRSDSSSKKD. Position 156 is a phosphoserine; by FAM20C (S156). S158 is subject to Phosphoserine. Active-site nucleophile residues include C190 and C193. C190 and C193 are oxidised to a cystine. At S428 the chain carries Phosphoserine. Positions 437 to 440 match the Prevents secretion from ER motif; it reads KDEL.

This sequence belongs to the protein disulfide isomerase family. In terms of assembly, part of a large chaperone multiprotein complex comprising DNAJB11, HSP90B1, HSPA5, HYOU, PDIA2, PDIA4, PDIA6, PPIB, SDF2L1, UGGT1 and very small amounts of ERP29, but not, or at very low levels, CALR nor CANX. Interacts with MICA on the surface of tumor cells, leading to MICA disulfide bond reduction which is required for its release from tumor cells. Interacts with ITGB3 following platelet stimulation. Interacts with ERN1; the interaction is direct. Interacts with EIF2AK3. As to expression, expressed in platelets (at protein level).

It is found in the endoplasmic reticulum lumen. Its subcellular location is the cell membrane. The protein localises to the melanosome. It catalyses the reaction Catalyzes the rearrangement of -S-S- bonds in proteins.. Functionally, may function as a chaperone that inhibits aggregation of misfolded proteins. Negatively regulates the unfolded protein response (UPR) through binding to UPR sensors such as ERN1, which in turn inactivates ERN1 signaling. May also regulate the UPR via the EIF2AK3 UPR sensor. Plays a role in platelet aggregation and activation by agonists such as convulxin, collagen and thrombin. This chain is Protein disulfide-isomerase A6 (PDIA6), found in Homo sapiens (Human).